The sequence spans 568 residues: Proline--tRNA ligase (568 aa).

Belongs to the class-II aminoacyl-tRNA synthetase family. ProS type 1 subfamily. Homodimer.

The protein resides in the cytoplasm. It carries out the reaction tRNA(Pro) + L-proline + ATP = L-prolyl-tRNA(Pro) + AMP + diphosphate. In terms of biological role, catalyzes the attachment of proline to tRNA(Pro) in a two-step reaction: proline is first activated by ATP to form Pro-AMP and then transferred to the acceptor end of tRNA(Pro). As ProRS can inadvertently accommodate and process non-cognate amino acids such as alanine and cysteine, to avoid such errors it has two additional distinct editing activities against alanine. One activity is designated as 'pretransfer' editing and involves the tRNA(Pro)-independent hydrolysis of activated Ala-AMP. The other activity is designated 'posttransfer' editing and involves deacylation of mischarged Ala-tRNA(Pro). The misacylated Cys-tRNA(Pro) is not edited by ProRS. This is Proline--tRNA ligase from Listeria monocytogenes serovar 1/2a (strain ATCC BAA-679 / EGD-e).